We begin with the raw amino-acid sequence, 129 residues long: GM1b/asialo-GM1 oligosaccharide-binding R-type lectin (129 aa).

Residues F21–N23, R26–D28, F32, and Y37–Q40 each bind a carbohydrate.

Homodimer. In terms of tissue distribution, highest expression in the outer part of the mantle rim. Highly expressed in gills, with a much lower expression in the digestive gland and posterior adductor muscle. Scarcely detectable in foot.

Hemagglutination activity requires divalent cations such as Ca(2+). Hemagglutination activity is weakly inhibited by monosaccharides such as D-Gal (25 mM), D-GalNAc (25 mM) and D-Fuc (25 mM) and by disaccharides such as melibiose (25 mM) and lactose (25 mM). Hemagglutination activity is inhibited by bovine submaxillary mucin, but not by porcine stomach mucin or fetuin. Its function is as follows. Galbeta1-3GalNAcbeta1-4Galbeta1-4Glc oligosaccharide-binding lectin. Binds strongly to the oligosaccharides of ganglioside GM1b and to a lesser extent its precursor asialo-GM1. Binds weakly to asialo-GM2 oligosaccharide and to the glycan moiety of globo-series stage-specific embryonal antigen 4 (SSEA-4) hexaose. Binds galactose, N-acetylgalactose and lactose. Does not bind GM1. Does not bind to Gal-beta1,3-GalNAc (Thomsen-Friedenreich antigen), the oligosaccharide of GM1a ganglioside or SSEA-4 tetraose. Does not bind to N-glycans, O-glycans or glycosaminoglycans of glycoproteins. Does not bind Lewis glycans, derivatives of lactose or N-acetyllactosamine or blood group (ABH-type) oligosaccharides. Does not bind glucose. Has hemagglutination activity towards rabbit erythrocytes. Displays cytotoxic effects against various cultured cell lines including human breast (MCF-7), cervical (HeLa) and colon cancer (Caco2) cell lines, as well as dog kidney (MDCK) cell line that express asialo-GM1 oligosaccharide at their cell surface. Shows dose- and time-dependent activation of MKK3/6, ERK1/2 and p38 MAPK, as well as caspase-3/9 in HeLa cervical cancer cells. No cytotoxic effect on BT474 human breast cancer cell line. May be involved in recognition of glycans found on parasitic or symbiotic microorganisms. The chain is GM1b/asialo-GM1 oligosaccharide-binding R-type lectin from Mytilisepta virgata (Purplish bifurcate mussel).